The sequence spans 217 residues: Adenylate kinase (217 aa).

10–15 contributes to the ATP binding site; the sequence is GAGKGT. Residues 30-59 are NMP; that stretch reads STGDMLREAVAKGTELGKKAKEYMDKGELV. Residues Thr31, Arg36, 57–59, 85–88, and Gln92 contribute to the AMP site; these read ELV and GFPR. The tract at residues 126-163 is LID; that stretch reads YRRTCRNCGAVYHLIYAPPKEDNKCDKCGGELYQRDDD. Arg127 serves as a coordination point for ATP. Zn(2+)-binding residues include Cys130 and Cys133. 136-137 contacts ATP; that stretch reads VY. Cys150 and Cys153 together coordinate Zn(2+). AMP-binding residues include Arg160 and Arg171. An ATP-binding site is contributed by Lys199.

Belongs to the adenylate kinase family. In terms of assembly, monomer.

It is found in the cytoplasm. It carries out the reaction AMP + ATP = 2 ADP. It functions in the pathway purine metabolism; AMP biosynthesis via salvage pathway; AMP from ADP: step 1/1. Its function is as follows. Catalyzes the reversible transfer of the terminal phosphate group between ATP and AMP. Plays an important role in cellular energy homeostasis and in adenine nucleotide metabolism. This Archaeoglobus fulgidus (strain ATCC 49558 / DSM 4304 / JCM 9628 / NBRC 100126 / VC-16) protein is Adenylate kinase.